We begin with the raw amino-acid sequence, 317 residues long: Malate dehydrogenase (317 aa).

An NADP(+)-binding site is contributed by G8–G14. 2 residues coordinate substrate: R85 and R91. NADP(+)-binding positions include N98 and V121 to N123. Positions 123 and 154 each coordinate substrate. H178 (proton acceptor) is an active-site residue.

It belongs to the LDH/MDH superfamily.

It carries out the reaction (S)-malate + NADP(+) = oxaloacetate + NADPH + H(+). The catalysed reaction is (S)-malate + NAD(+) = oxaloacetate + NADH + H(+). Functionally, catalyzes the reversible oxidation of malate to oxaloacetate. The chain is Malate dehydrogenase (mdh) from Methanosphaera stadtmanae (strain ATCC 43021 / DSM 3091 / JCM 11832 / MCB-3).